A 248-amino-acid chain; its full sequence is Acetylglutamate kinase (248 aa).

Substrate contacts are provided by residues 41 to 42 (GG), arginine 63, and asparagine 155.

It belongs to the acetylglutamate kinase family. ArgB subfamily.

It localises to the cytoplasm. The catalysed reaction is N-acetyl-L-glutamate + ATP = N-acetyl-L-glutamyl 5-phosphate + ADP. Its pathway is amino-acid biosynthesis; L-arginine biosynthesis; N(2)-acetyl-L-ornithine from L-glutamate: step 2/4. Functionally, catalyzes the ATP-dependent phosphorylation of N-acetyl-L-glutamate. In Lactiplantibacillus plantarum (strain ATCC BAA-793 / NCIMB 8826 / WCFS1) (Lactobacillus plantarum), this protein is Acetylglutamate kinase.